We begin with the raw amino-acid sequence, 300 residues long: Zinc finger protein 705B (300 aa).

One can recognise a KRAB domain in the interval 7–78 (VTFEDVAIDF…GRVFLQDQNP (72 aa)). C2H2-type zinc fingers lie at residues 172-194 (YQCNLCEKAYTNCFYLRRHKMTH), 200-222 (YACHLCGKAFTQCSHLRRHEKTH), and 228-250 (YKCHQCGKAFIQSFNLRRHERTH). A C2H2-type 4; degenerate zinc finger spans residues 256 to 278 (YECDKSGKAFSQSSGFRGNKIIH).

It belongs to the krueppel C2H2-type zinc-finger protein family.

The protein localises to the nucleus. Functionally, may be involved in transcriptional regulation. This chain is Zinc finger protein 705B (ZNF705B), found in Homo sapiens (Human).